The primary structure comprises 78 residues: Small ribosomal subunit protein bS18c (78 aa).

Belongs to the bacterial ribosomal protein bS18 family. As to quaternary structure, part of the 30S ribosomal subunit.

The protein resides in the plastid. Its subcellular location is the chloroplast. The polypeptide is Small ribosomal subunit protein bS18c (Oltmannsiellopsis viridis (Marine flagellate)).